Here is a 358-residue protein sequence, read N- to C-terminus: tRNA-specific 2-thiouridylase MnmA (358 aa).

ATP-binding positions include 6–13 and leucine 32; that span reads AMSGGVDS. Residue cysteine 101 is the Nucleophile of the active site. The cysteines at positions 101 and 193 are disulfide-linked. Glycine 125 lines the ATP pocket. The tract at residues 143-145 is interaction with tRNA; the sequence is KDQ. Cysteine 193 acts as the Cysteine persulfide intermediate in catalysis.

The protein belongs to the MnmA/TRMU family.

It localises to the cytoplasm. It carries out the reaction S-sulfanyl-L-cysteinyl-[protein] + uridine(34) in tRNA + AH2 + ATP = 2-thiouridine(34) in tRNA + L-cysteinyl-[protein] + A + AMP + diphosphate + H(+). Functionally, catalyzes the 2-thiolation of uridine at the wobble position (U34) of tRNA, leading to the formation of s(2)U34. In Mycobacterium avium (strain 104), this protein is tRNA-specific 2-thiouridylase MnmA.